The sequence spans 417 residues: NADH-quinone oxidoreductase subunit D (417 aa).

This sequence belongs to the complex I 49 kDa subunit family. As to quaternary structure, NDH-1 is composed of 14 different subunits. Subunits NuoB, C, D, E, F, and G constitute the peripheral sector of the complex.

The protein localises to the cell inner membrane. It catalyses the reaction a quinone + NADH + 5 H(+)(in) = a quinol + NAD(+) + 4 H(+)(out). Its function is as follows. NDH-1 shuttles electrons from NADH, via FMN and iron-sulfur (Fe-S) centers, to quinones in the respiratory chain. The immediate electron acceptor for the enzyme in this species is believed to be ubiquinone. Couples the redox reaction to proton translocation (for every two electrons transferred, four hydrogen ions are translocated across the cytoplasmic membrane), and thus conserves the redox energy in a proton gradient. The chain is NADH-quinone oxidoreductase subunit D from Legionella pneumophila subsp. pneumophila (strain Philadelphia 1 / ATCC 33152 / DSM 7513).